A 203-amino-acid polypeptide reads, in one-letter code: Thymidylate kinase (203 aa).

14-21 contacts ATP; the sequence is GMDGIGKS.

This sequence belongs to the thymidylate kinase family.

It carries out the reaction dTMP + ATP = dTDP + ADP. Its function is as follows. Phosphorylation of dTMP to form dTDP in both de novo and salvage pathways of dTTP synthesis. In Rickettsia typhi (strain ATCC VR-144 / Wilmington), this protein is Thymidylate kinase.